Here is a 455-residue protein sequence, read N- to C-terminus: uncharacterized protein (455 aa).

Positions 1 to 24 (MKTTKILLHTGVLALSLLATQVMA) are cleaved as a signal peptide.

This is an uncharacterized protein from Pseudomonas aeruginosa (strain ATCC 15692 / DSM 22644 / CIP 104116 / JCM 14847 / LMG 12228 / 1C / PRS 101 / PAO1).